A 277-amino-acid polypeptide reads, in one-letter code: Putative pyruvate, phosphate dikinase regulatory protein (277 aa).

156–163 (GVSRTSKT) is a binding site for ADP.

It belongs to the pyruvate, phosphate/water dikinase regulatory protein family. PDRP subfamily.

The enzyme catalyses N(tele)-phospho-L-histidyl/L-threonyl-[pyruvate, phosphate dikinase] + ADP = N(tele)-phospho-L-histidyl/O-phospho-L-threonyl-[pyruvate, phosphate dikinase] + AMP + H(+). It catalyses the reaction N(tele)-phospho-L-histidyl/O-phospho-L-threonyl-[pyruvate, phosphate dikinase] + phosphate + H(+) = N(tele)-phospho-L-histidyl/L-threonyl-[pyruvate, phosphate dikinase] + diphosphate. Bifunctional serine/threonine kinase and phosphorylase involved in the regulation of the pyruvate, phosphate dikinase (PPDK) by catalyzing its phosphorylation/dephosphorylation. The chain is Putative pyruvate, phosphate dikinase regulatory protein from Carboxydothermus hydrogenoformans (strain ATCC BAA-161 / DSM 6008 / Z-2901).